A 166-amino-acid chain; its full sequence is Ubiquitin-conjugating enzyme E2 7 (166 aa).

Position 2 is an N-acetylalanine (Ala2). The UBC core domain occupies 4 to 164 (QASLLLQKQL…VSRCVRKSQE (161 aa)). The active-site Glycyl thioester intermediate is the Cys89.

This sequence belongs to the ubiquitin-conjugating enzyme family.

It catalyses the reaction S-ubiquitinyl-[E1 ubiquitin-activating enzyme]-L-cysteine + [E2 ubiquitin-conjugating enzyme]-L-cysteine = [E1 ubiquitin-activating enzyme]-L-cysteine + S-ubiquitinyl-[E2 ubiquitin-conjugating enzyme]-L-cysteine.. The protein operates within protein modification; protein ubiquitination. In terms of biological role, accepts the ubiquitin from the E1 complex and catalyzes its covalent attachment to other proteins. Involved in the formation of multiubiquitin chains. Signal the protein for selective degradation. The polypeptide is Ubiquitin-conjugating enzyme E2 7 (UBC7) (Arabidopsis thaliana (Mouse-ear cress)).